Consider the following 239-residue polypeptide: MNKNIIIKSIAALTILTSITGVGTTVVDGIQQTAKAENSVKLITNTNVAPYSGVTWMGAGTGFVVGNHTIITNKHVTYHMKVGDEIKAHPNGFYNNGGGLYKVTKIVDYPGKEDIAVVQVEEKSTQPKGRKFKDFTSKFNIASEAKENEPISVIGYPNPNGNKLQMYESTGKVLSVNGNIVSSDAIIQPGSSGSPILNSKHEAIGVIYAGNKPSGESTRGFAVYFSPEIKKFIADNLDK.

The N-terminal stretch at Met-1–Ala-36 is a signal peptide. Residues His-75, Asp-114, and Ser-192 each act as charge relay system in the active site.

The protein belongs to the peptidase S1B family.

Its subcellular location is the secreted. This Staphylococcus aureus (strain JH9) protein is Serine protease SplF (splF).